Here is a 95-residue protein sequence, read N- to C-terminus: Aspartyl/glutamyl-tRNA(Asn/Gln) amidotransferase subunit C (95 aa).

It belongs to the GatC family. As to quaternary structure, heterotrimer of A, B and C subunits.

The catalysed reaction is L-glutamyl-tRNA(Gln) + L-glutamine + ATP + H2O = L-glutaminyl-tRNA(Gln) + L-glutamate + ADP + phosphate + H(+). The enzyme catalyses L-aspartyl-tRNA(Asn) + L-glutamine + ATP + H2O = L-asparaginyl-tRNA(Asn) + L-glutamate + ADP + phosphate + 2 H(+). Allows the formation of correctly charged Asn-tRNA(Asn) or Gln-tRNA(Gln) through the transamidation of misacylated Asp-tRNA(Asn) or Glu-tRNA(Gln) in organisms which lack either or both of asparaginyl-tRNA or glutaminyl-tRNA synthetases. The reaction takes place in the presence of glutamine and ATP through an activated phospho-Asp-tRNA(Asn) or phospho-Glu-tRNA(Gln). This chain is Aspartyl/glutamyl-tRNA(Asn/Gln) amidotransferase subunit C, found in Nitrosospira multiformis (strain ATCC 25196 / NCIMB 11849 / C 71).